Here is a 106-residue protein sequence, read N- to C-terminus: Large ribosomal subunit protein uL24 (106 aa).

It belongs to the universal ribosomal protein uL24 family. Part of the 50S ribosomal subunit.

In terms of biological role, one of two assembly initiator proteins, it binds directly to the 5'-end of the 23S rRNA, where it nucleates assembly of the 50S subunit. One of the proteins that surrounds the polypeptide exit tunnel on the outside of the subunit. The chain is Large ribosomal subunit protein uL24 from Paracidovorax citrulli (strain AAC00-1) (Acidovorax citrulli).